The primary structure comprises 287 residues: Bifunctional protein FolD (287 aa).

NADP(+) contacts are provided by residues 166–168 (GAS) and isoleucine 232.

Belongs to the tetrahydrofolate dehydrogenase/cyclohydrolase family. In terms of assembly, homodimer.

The enzyme catalyses (6R)-5,10-methylene-5,6,7,8-tetrahydrofolate + NADP(+) = (6R)-5,10-methenyltetrahydrofolate + NADPH. It catalyses the reaction (6R)-5,10-methenyltetrahydrofolate + H2O = (6R)-10-formyltetrahydrofolate + H(+). The protein operates within one-carbon metabolism; tetrahydrofolate interconversion. Functionally, catalyzes the oxidation of 5,10-methylenetetrahydrofolate to 5,10-methenyltetrahydrofolate and then the hydrolysis of 5,10-methenyltetrahydrofolate to 10-formyltetrahydrofolate. The chain is Bifunctional protein FolD from Buchnera aphidicola subsp. Baizongia pistaciae (strain Bp).